The primary structure comprises 577 residues: Double-stranded RNA-binding protein Staufen homolog 1 (577 aa).

Ser2 is modified (N-acetylserine). The segment covering 34 to 44 (SIPSTTSSLPS) has biased composition (polar residues). Positions 34–55 (SIPSTTSSLPSENAGRPIQNSA) are disordered. The region spanning 72–162 (TPTVELNALC…AAKALRILQN (91 aa)) is the DRBM 1 domain. Arg108 carries the asymmetric dimethylarginine modification. Arg115 is modified (asymmetric dimethylarginine; alternate). Arg115 carries the post-translational modification Omega-N-methylarginine; alternate. A Phosphoserine modification is found at Ser176. One can recognise a DRBM 2 domain in the interval 184–251 (SEISQVFEIA…AIAVLEELKK (68 aa)). Ser278 carries the post-translational modification Phosphoserine. Residues 286–354 (NPISRLAQIQ…AENMLEILGF (69 aa)) enclose the DRBM 3 domain. Residues 360 to 397 (QPTKPALKSEEKTPIKKPGDGRKVTFFEPGSGDENGTS) are disordered. Residues 366 to 384 (LKSEEKTPIKKPGDGRKVT) are compositionally biased toward basic and acidic residues. Ser390 carries the phosphoserine modification.

As to quaternary structure, binds tubulin. Binds with low affinity single-stranded RNA or DNA homopolymers. Interacts with CASC3 in an RNA-dependent manner. Identified in a mRNP complex, at least composed of DHX9, DDX3X, ELAVL1, HNRNPU, IGF2BP1, ILF3, PABPC1, PCBP2, PTBP2, STAU1, STAU2, SYNCRIP and YBX1. In terms of assembly, (Microbial infection) Interacts with HERV-K rec and gag proteins. (Microbial infection) Interacts with HIV-1 GAG polyprotein. As to quaternary structure, (Microbial infection) Interacts with influenza virus NS1 protein. In terms of assembly, (Microbial infection) Interacts with Ebola virus NP, VP30 and VP35. In terms of tissue distribution, widely expressed. Expressed in brain, pancreas, heart, skeletal muscles, liver, lung, kidney and placenta.

It is found in the cytoplasm. Its subcellular location is the rough endoplasmic reticulum. Its function is as follows. Binds double-stranded RNA (regardless of the sequence) and tubulin. May play a role in specific positioning of mRNAs at given sites in the cell by cross-linking cytoskeletal and RNA components, and in stimulating their translation at the site. In terms of biological role, (Microbial infection) Plays a role in virus particles production of many viruses including of HIV-1, HERV-K, ebola virus and influenza virus. Acts by interacting with various viral proteins involved in particle budding process. This is Double-stranded RNA-binding protein Staufen homolog 1 (STAU1) from Homo sapiens (Human).